The sequence spans 859 residues: DNA mismatch repair protein MutS (859 aa).

Residue 622 to 629 coordinates ATP; the sequence is GPNMGGKS.

Belongs to the DNA mismatch repair MutS family.

In terms of biological role, this protein is involved in the repair of mismatches in DNA. It is possible that it carries out the mismatch recognition step. This protein has a weak ATPase activity. The polypeptide is DNA mismatch repair protein MutS (Syntrophomonas wolfei subsp. wolfei (strain DSM 2245B / Goettingen)).